We begin with the raw amino-acid sequence, 140 residues long: Sex-regulated protein janus-B (140 aa).

R42 is a binding site for substrate. The Proton acceptor role is filled by H69. S110–T112 serves as a coordination point for substrate.

This sequence belongs to the janus family.

JanA and janB regulate somatic sex differentiation. This Drosophila simulans (Fruit fly) protein is Sex-regulated protein janus-B (janB).